A 376-amino-acid polypeptide reads, in one-letter code: Protein RecA (376 aa).

66–73 (GPESSGKT) lines the ATP pocket. Residues 329–376 (VGVKPEDLTAEPGADAAGAAADAEAPAKSVPAPAAKSAKGSKAAAAKS) form a disordered region. Positions 338–376 (AEPGADAAGAAADAEAPAKSVPAPAAKSAKGSKAAAAKS) are enriched in low complexity.

It belongs to the RecA family.

The protein localises to the cytoplasm. Functionally, can catalyze the hydrolysis of ATP in the presence of single-stranded DNA, the ATP-dependent uptake of single-stranded DNA by duplex DNA, and the ATP-dependent hybridization of homologous single-stranded DNAs. It interacts with LexA causing its activation and leading to its autocatalytic cleavage. The chain is Protein RecA from Streptomyces rimosus.